A 360-amino-acid polypeptide reads, in one-letter code: Protein phosphatase 1 regulatory subunit 7 (360 aa).

The tract at residues Met-1–Leu-65 is disordered. Ala-2 is subject to N-acetylalanine. Phosphoserine is present on residues Ser-12, Ser-24, Ser-27, Ser-44, and Ser-47. Over residues Glu-17–Lys-34 the composition is skewed to basic and acidic residues. Positions Glu-53–Gln-63 are enriched in acidic residues. 11 LRR repeats span residues Asp-77–Lys-98, Lys-99–Gln-120, Ser-121–Thr-142, Glu-143–Thr-164, Arg-165–His-186, Gln-187–Thr-208, Asn-209–Thr-230, Asn-231–Val-252, Asn-253–Asn-274, Lys-275–Thr-296, and Glu-297–Lys-318. Residue Ser-322 is modified to Phosphoserine. In terms of domain architecture, LRRCT spans Asn-331–Phe-360.

Belongs to the SDS22 family. As to quaternary structure, interacts with PPP1CA, PPP1CB and PPP1CC/PPP1G. Interacts with PPP1CC isoform 2 in motile caudal epididymal spermatozoa. Expressed in epididymal spermatozoa including the principal piece of the flagellum and the head-neck junction.

It is found in the nucleus. Its function is as follows. Regulatory subunit of protein phosphatase 1. Inactivates the PPP1CC isoform 2 during epididymal sperm maturation. This chain is Protein phosphatase 1 regulatory subunit 7 (PPP1R7), found in Bos taurus (Bovine).